The primary structure comprises 544 residues: Sialidase (544 aa).

An N-terminal signal peptide occupies residues Met-1–Ala-22. BNR repeat units lie at residues Ser-239–Lys-250, Ala-318–Ala-329, and Met-378–Met-389. Residue Glu-399 is part of the active site. Residue Arg-415 coordinates substrate. A BNR 4 repeat occupies Ala-425–Glu-436. Arg-479 is a binding site for substrate. One copy of the BNR 5 repeat lies at Lys-485–Pro-496.

It belongs to the glycosyl hydrolase 33 family.

The protein resides in the periplasm. The catalysed reaction is Hydrolysis of alpha-(2-&gt;3)-, alpha-(2-&gt;6)-, alpha-(2-&gt;8)- glycosidic linkages of terminal sialic acid residues in oligosaccharides, glycoproteins, glycolipids, colominic acid and synthetic substrates.. In terms of biological role, sialidases have been suggested to be pathogenic factors in microbial infections. The chain is Sialidase (nanH) from Bacteroides fragilis (strain YCH46).